Here is a 458-residue protein sequence, read N- to C-terminus: Bifunctional protein GlmU (458 aa).

A pyrophosphorylase region spans residues 1-229; sequence MNKFAIVLAA…FDESLGVNDR (229 aa). UDP-N-acetyl-alpha-D-glucosamine is bound by residues 8–11, K22, Q72, and 77–78; these read LAAG and GT. D102 provides a ligand contact to Mg(2+). UDP-N-acetyl-alpha-D-glucosamine contacts are provided by G139, E154, N169, and N227. N227 is a Mg(2+) binding site. Residues 230 to 250 form a linker region; it reads VALSQAELTMRKRINHQHMVN. An N-acetyltransferase region spans residues 251–458; sequence GVTLIDPATT…AKKMPHYRGQ (208 aa). Residues R332 and K350 each contribute to the UDP-N-acetyl-alpha-D-glucosamine site. H362 acts as the Proton acceptor in catalysis. The UDP-N-acetyl-alpha-D-glucosamine site is built by Y365 and N376. Acetyl-CoA-binding residues include A379, S404, A422, and R439.

It in the N-terminal section; belongs to the N-acetylglucosamine-1-phosphate uridyltransferase family. In the C-terminal section; belongs to the transferase hexapeptide repeat family. Homotrimer. Mg(2+) serves as cofactor.

It is found in the cytoplasm. It catalyses the reaction alpha-D-glucosamine 1-phosphate + acetyl-CoA = N-acetyl-alpha-D-glucosamine 1-phosphate + CoA + H(+). It carries out the reaction N-acetyl-alpha-D-glucosamine 1-phosphate + UTP + H(+) = UDP-N-acetyl-alpha-D-glucosamine + diphosphate. The protein operates within nucleotide-sugar biosynthesis; UDP-N-acetyl-alpha-D-glucosamine biosynthesis; N-acetyl-alpha-D-glucosamine 1-phosphate from alpha-D-glucosamine 6-phosphate (route II): step 2/2. Its pathway is nucleotide-sugar biosynthesis; UDP-N-acetyl-alpha-D-glucosamine biosynthesis; UDP-N-acetyl-alpha-D-glucosamine from N-acetyl-alpha-D-glucosamine 1-phosphate: step 1/1. It functions in the pathway bacterial outer membrane biogenesis; LPS lipid A biosynthesis. Catalyzes the last two sequential reactions in the de novo biosynthetic pathway for UDP-N-acetylglucosamine (UDP-GlcNAc). The C-terminal domain catalyzes the transfer of acetyl group from acetyl coenzyme A to glucosamine-1-phosphate (GlcN-1-P) to produce N-acetylglucosamine-1-phosphate (GlcNAc-1-P), which is converted into UDP-GlcNAc by the transfer of uridine 5-monophosphate (from uridine 5-triphosphate), a reaction catalyzed by the N-terminal domain. In Lactococcus lactis subsp. lactis (strain IL1403) (Streptococcus lactis), this protein is Bifunctional protein GlmU.